The sequence spans 49 residues: Large ribosomal subunit protein bL33B (49 aa).

This sequence belongs to the bacterial ribosomal protein bL33 family.

This Bacillus anthracis protein is Large ribosomal subunit protein bL33B.